A 427-amino-acid polypeptide reads, in one-letter code: Inward rectifier potassium channel 2 (427 aa).

Topologically, residues 1 to 81 are cytoplasmic; that stretch reads MGSVRTNRYS…IFTTCVDIRW (81 aa). C76 carries the S-nitrosocysteine modification. A helical membrane pass occupies residues 82–106; it reads RWMLVIFCLAFVLSWLFFGCVFWLI. The Extracellular segment spans residues 107-128; that stretch reads ALLHGDLDASKESKACVSEVNS. Residues 129–140 constitute an intramembrane region (helical; Pore-forming); that stretch reads FTAAFLFSIETQ. The segment at residues 141–147 is an intramembrane region (pore-forming); sequence TTIGYGF. The Selectivity filter signature appears at 142–147; the sequence is TIGYGF. Residues 148 to 156 lie on the Extracellular side of the membrane; sequence RCVTDECPI. A helical transmembrane segment spans residues 157–178; the sequence is AVFMVVFQSIVGCIIDAFIIGA. The Cytoplasmic portion of the chain corresponds to 179–427; sequence VMAKMAKPKK…PRPLRRESEI (249 aa). Residues 181-208 are polyphosphoinositide (PIP2)-binding; sequence AKMAKPKKRNETLVFSHNAVIAMRDGKL. The interval 383-427 is disordered; that stretch reads TSKEEEDSENGVPESTSTDSPPGIDLHNQASVPLEPRPLRRESEI. Residues 425-427 carry the PDZ-binding motif; that stretch reads SEI.

Belongs to the inward rectifier-type potassium channel (TC 1.A.2.1) family. KCNJ2 subfamily. Homotetramer. Homomultimeric and heteromultimeric association with KCNJ4/Kir2.3. Can form heteromeric channels with Kir2.6/KCNJ18. Associates, via its PDZ-recognition domain, with a complex containing LIN7A, LIN7B, LIN7C, DLG1, CASK and APBA1. S-nitrosylation increases the open probability and inward rectifying currents. In terms of tissue distribution, prominently expressed in the central nervous system. Also found in other excitable tissues such as heart and skeletal muscle.

Its subcellular location is the cell membrane. It localises to the sarcolemma. The protein localises to the T-tubule. The enzyme catalyses K(+)(in) = K(+)(out). Its activity is regulated as follows. Activated by phosphatidylinositol 4,5 biphosphate (PtdIns(4,5)P2). Inward rectifier potassium channels are characterized by a greater tendency to allow potassium to flow into the cell rather than out of it. Their voltage dependence is regulated by the concentration of extracellular potassium; as external potassium is raised, the voltage range of the channel opening shifts to more positive voltages. The inward rectification is mainly due to the blockage of outward current by internal magnesium. Can be blocked by extracellular barium and cesium. Probably participates in establishing action potential waveform and excitability of neuronal and muscle tissues. The sequence is that of Inward rectifier potassium channel 2 (Kcnj2) from Rattus norvegicus (Rat).